Reading from the N-terminus, the 422-residue chain is L-threonine dehydratase biosynthetic IlvA (422 aa).

Lys56 is modified (N6-(pyridoxal phosphate)lysine). Pyridoxal 5'-phosphate contacts are provided by residues Asn83, 189-193 (GGGGL), and Ser315. In terms of domain architecture, ACT-like spans 339 to 413 (HYFILNFPQR…FDPSNIYINE (75 aa)).

It belongs to the serine/threonine dehydratase family. As to quaternary structure, homotetramer. Requires pyridoxal 5'-phosphate as cofactor.

The catalysed reaction is L-threonine = 2-oxobutanoate + NH4(+). It functions in the pathway amino-acid biosynthesis; L-isoleucine biosynthesis; 2-oxobutanoate from L-threonine: step 1/1. Its function is as follows. Catalyzes the anaerobic formation of alpha-ketobutyrate and ammonia from threonine in a two-step reaction. The first step involved a dehydration of threonine and a production of enamine intermediates (aminocrotonate), which tautomerizes to its imine form (iminobutyrate). Both intermediates are unstable and short-lived. The second step is the nonenzymatic hydrolysis of the enamine/imine intermediates to form 2-ketobutyrate and free ammonia. In the low water environment of the cell, the second step is accelerated by RidA. The protein is L-threonine dehydratase biosynthetic IlvA (ilvA) of Staphylococcus aureus (strain NCTC 8325 / PS 47).